A 149-amino-acid chain; its full sequence is UPF0178 protein Lmo1456 (149 aa).

The protein belongs to the UPF0178 family.

The chain is UPF0178 protein Lmo1456 from Listeria monocytogenes serovar 1/2a (strain ATCC BAA-679 / EGD-e).